The sequence spans 120 residues: Large ribosomal subunit protein bL19 (120 aa).

This sequence belongs to the bacterial ribosomal protein bL19 family.

Its function is as follows. This protein is located at the 30S-50S ribosomal subunit interface and may play a role in the structure and function of the aminoacyl-tRNA binding site. The protein is Large ribosomal subunit protein bL19 of Trichormus variabilis (strain ATCC 29413 / PCC 7937) (Anabaena variabilis).